The sequence spans 286 residues: 4-diphosphocytidyl-2-C-methyl-D-erythritol kinase (286 aa).

The active site involves Lys11. 94–104 (PMGGGIGGGSS) contributes to the ATP binding site. Asp136 is an active-site residue.

This sequence belongs to the GHMP kinase family. IspE subfamily.

It catalyses the reaction 4-CDP-2-C-methyl-D-erythritol + ATP = 4-CDP-2-C-methyl-D-erythritol 2-phosphate + ADP + H(+). The protein operates within isoprenoid biosynthesis; isopentenyl diphosphate biosynthesis via DXP pathway; isopentenyl diphosphate from 1-deoxy-D-xylulose 5-phosphate: step 3/6. Functionally, catalyzes the phosphorylation of the position 2 hydroxy group of 4-diphosphocytidyl-2C-methyl-D-erythritol. The chain is 4-diphosphocytidyl-2-C-methyl-D-erythritol kinase from Pseudomonas putida (strain GB-1).